Here is a 553-residue protein sequence, read N- to C-terminus: Rhodopsin kinase GRK7 (553 aa).

Phosphoserine; by PKA is present on S36. The region spanning 56 to 176 (FHSLCEQQPI…VTSAFYDKFL (121 aa)) is the RGS domain. One can recognise a Protein kinase domain in the interval 191–454 (FTEFRVLGKG…SDDPRKHHFF (264 aa)). Residues 197 to 205 (LGKGGFGEV) and K220 each bind ATP. The active-site Proton acceptor is the D316. The region spanning 455 to 520 (KTINFPRLEA…GAVPIAWQEE (66 aa)) is the AGC-kinase C-terminal domain. Cysteine methyl ester is present on C550. Residue C550 is the site of S-geranylgeranyl cysteine attachment. Positions 551–553 (LLL) are cleaved as a propeptide — removed in mature form.

The protein belongs to the protein kinase superfamily. AGC Ser/Thr protein kinase family. GPRK subfamily. Interacts (when prenylated) with PDE6D; this promotes release from membranes. In terms of processing, autophosphorylated in vitro at Ser-490. Phosphorylation at Ser-36 is regulated by light and activated by cAMP. Retinal cones, outer and inner segments.

It localises to the membrane. The enzyme catalyses L-threonyl-[rhodopsin] + ATP = O-phospho-L-threonyl-[rhodopsin] + ADP + H(+). It carries out the reaction L-seryl-[rhodopsin] + ATP = O-phospho-L-seryl-[rhodopsin] + ADP + H(+). With respect to regulation, inhibited by phosphorylation of Ser-36. Retina-specific kinase involved in the shutoff of the photoresponse and adaptation to changing light conditions via cone opsin phosphorylation, including rhodopsin (RHO). In Homo sapiens (Human), this protein is Rhodopsin kinase GRK7 (GRK7).